We begin with the raw amino-acid sequence, 146 residues long: 3-hydroxyacyl-[acyl-carrier-protein] dehydratase FabZ (146 aa).

His51 is a catalytic residue.

The protein belongs to the thioester dehydratase family. FabZ subfamily.

It localises to the cytoplasm. The enzyme catalyses a (3R)-hydroxyacyl-[ACP] = a (2E)-enoyl-[ACP] + H2O. Functionally, involved in unsaturated fatty acids biosynthesis. Catalyzes the dehydration of short chain beta-hydroxyacyl-ACPs and long chain saturated and unsaturated beta-hydroxyacyl-ACPs. In Staphylococcus aureus (strain Mu3 / ATCC 700698), this protein is 3-hydroxyacyl-[acyl-carrier-protein] dehydratase FabZ.